The chain runs to 256 residues: Adenylate kinase (256 aa).

Residue 49–54 (GAGKGT) coordinates ATP. The tract at residues 69-98 (ATGDMLREQVQQKTPLGIEAKKIMDAGGLV) is NMP. AMP contacts are provided by residues Thr70, Arg75, 96–98 (GLV), 125–128 (GFPR), and Gln132. An LID region spans residues 166 to 203 (GRLVHPASGRSYHKEFNPPKKRNVDDVTGEPLIQRSDD). Residues Arg167 and 176 to 177 (SY) each bind ATP. Arg200 and Arg211 together coordinate AMP. Gln239 contributes to the ATP binding site.

This sequence belongs to the adenylate kinase family. AK2 subfamily. As to quaternary structure, monomer.

Its subcellular location is the cytoplasm. The protein localises to the cytosol. It is found in the mitochondrion intermembrane space. It carries out the reaction AMP + ATP = 2 ADP. In terms of biological role, catalyzes the reversible transfer of the terminal phosphate group between ATP and AMP. Plays an important role in cellular energy homeostasis and in adenine nucleotide metabolism. Adenylate kinase activity is critical for regulation of the phosphate utilization and the AMP de novo biosynthesis pathways. The protein is Adenylate kinase of Laccaria bicolor (strain S238N-H82 / ATCC MYA-4686) (Bicoloured deceiver).